We begin with the raw amino-acid sequence, 127 residues long: Translation initiation factor 5A (127 aa).

Hypusine is present on Lys35.

It belongs to the eIF-5A family.

It is found in the cytoplasm. Functionally, functions by promoting the formation of the first peptide bond. The protein is Translation initiation factor 5A (eIF5A) of Methanothrix thermoacetophila (strain DSM 6194 / JCM 14653 / NBRC 101360 / PT) (Methanosaeta thermophila).